We begin with the raw amino-acid sequence, 241 residues long: NH(3)-dependent NAD(+) synthetase (241 aa).

27 to 34 provides a ligand contact to ATP; that stretch reads GISGGIDS. Residue Asp33 participates in Mg(2+) binding. Position 109 (Arg109) interacts with deamido-NAD(+). Thr129 is an ATP binding site. Residue Glu134 coordinates Mg(2+). Deamido-NAD(+) contacts are provided by Lys142 and Asp149. Residues Lys158 and Thr180 each contribute to the ATP site. 231-232 is a binding site for deamido-NAD(+); it reads HK.

It belongs to the NAD synthetase family. As to quaternary structure, homodimer.

The catalysed reaction is deamido-NAD(+) + NH4(+) + ATP = AMP + diphosphate + NAD(+) + H(+). Its pathway is cofactor biosynthesis; NAD(+) biosynthesis; NAD(+) from deamido-NAD(+) (ammonia route): step 1/1. Its function is as follows. Catalyzes the ATP-dependent amidation of deamido-NAD to form NAD. Uses ammonia as a nitrogen source. This Thermoplasma acidophilum (strain ATCC 25905 / DSM 1728 / JCM 9062 / NBRC 15155 / AMRC-C165) protein is NH(3)-dependent NAD(+) synthetase.